The sequence spans 297 residues: MENFQKVEKIGEGTYGVVYKARNRETGEIVALKKIRLDTETEGVPSTAIREISLLKELNHPNIVKLLDVIHTENKLYLVFEFLNQDLKKFMDGSNISGISLALVKSYLFQLLQGLAFCHSHRVLHRDLKPQNLLINSDGAIKLADFGLARAFGVPVRTFTHEVVTLWYRAPEILLGCKFYSTAVDIWSLGCIFAEMITRRALFPGDSEIDQLFRIFRTLGTPDEVSWPGVTTMPDYKSTFPKWIRQDFSKVVPPLDEDGRDLLAQMLQYDSNKRISAKVALTHPFFRDVSRPTPHLI.

A Protein kinase domain is found at 4–286; that stretch reads FQKVEKIGEG…AKVALTHPFF (283 aa). Residues 10-18, Lys33, 81-83, and Asp86 contribute to the ATP site; these read IGEGTYGVV and EFL. At Thr14 the chain carries Phosphothreonine. Tyr15 carries the phosphotyrosine modification. The active-site Proton acceptor is the Asp127. ATP-binding positions include 129–132 and Asp145; that span reads KPQN. Residue Thr160 is modified to Phosphothreonine; by CAK.

It belongs to the protein kinase superfamily. CMGC Ser/Thr protein kinase family. CDC2/CDKX subfamily. In terms of assembly, interacts with spdya.

The enzyme catalyses L-seryl-[protein] + ATP = O-phospho-L-seryl-[protein] + ADP + H(+). The catalysed reaction is L-threonyl-[protein] + ATP = O-phospho-L-threonyl-[protein] + ADP + H(+). Phosphorylation at Thr-14 or Tyr-15 inactivates the enzyme, while phosphorylation at Thr-160 activates it. Activated by spdya. Its function is as follows. Serine/threonine-protein kinase involved in the control of the cell cycle; essential for meiosis, but dispensable for mitosis. Triggers duplication of centrosomes and DNA. Acts at the G1-S transition to promote the E2F transcriptional program and the initiation of DNA synthesis, and modulates G2 progression; controls the timing of entry into mitosis/meiosis by controlling the subsequent activation of cyclin B/CDK1 by phosphorylation, and coordinates the activation of cyclin B/CDK1 at the centrosome and in the nucleus. Crucial role in orchestrating a fine balance between cellular proliferation, cell death, and DNA repair in embryonic stem cells (ESCs). Activity of CDK2 is maximal during S phase and G2; activated by interaction with cyclin E during the early stages of DNA synthesis to permit G1-S transition, and subsequently activated by cyclin A2 (cyclin A1 in germ cells) during the late stages of DNA replication to drive the transition from S phase to mitosis, the G2 phase. This Xenopus laevis (African clawed frog) protein is Cyclin-dependent kinase 2 (cdk2).